Consider the following 396-residue polypeptide: S-adenosylmethionine synthase (396 aa).

H16 is a binding site for ATP. Mg(2+) is bound at residue D18. Residue E44 participates in K(+) binding. E57 and Q100 together coordinate L-methionine. Positions 100–110 (QSVDIAQGVDR) are flexible loop. ATP-binding positions include 165-167 (DAK), D240, 246-247 (RK), A263, and K267. D240 lines the L-methionine pocket. K271 is an L-methionine binding site.

The protein belongs to the AdoMet synthase family. In terms of assembly, homotetramer; dimer of dimers. The cofactor is Mg(2+). Requires K(+) as cofactor.

It is found in the cytoplasm. It catalyses the reaction L-methionine + ATP + H2O = S-adenosyl-L-methionine + phosphate + diphosphate. Its pathway is amino-acid biosynthesis; S-adenosyl-L-methionine biosynthesis; S-adenosyl-L-methionine from L-methionine: step 1/1. In terms of biological role, catalyzes the formation of S-adenosylmethionine (AdoMet) from methionine and ATP. The overall synthetic reaction is composed of two sequential steps, AdoMet formation and the subsequent tripolyphosphate hydrolysis which occurs prior to release of AdoMet from the enzyme. This is S-adenosylmethionine synthase from Pseudomonas syringae pv. syringae (strain B728a).